The chain runs to 323 residues: Transcription factor MafB (323 aa).

Residue lysine 32 forms a Glycyl lysine isopeptide (Lys-Gly) (interchain with G-Cter in SUMO) linkage. Residues 34-43 show a composition bias toward basic and acidic residues; that stretch reads EPLGRAERPG. Disordered regions lie at residues 34-78 and 116-210; these read EPLG…PTEP and PVPQ…VEDR. A compositionally biased stretch (low complexity) spans 54-77; that stretch reads SVSSTPLSTPCSSVPSSPSFSPTE. Basic residues-rich tracts occupy residues 129 to 143 and 159 to 168; these read SAHH…HPHH and AHPHHHHHHQ. A compositionally biased stretch (low complexity) spans 192–201; it reads PHATAAATAA. Residues 238–263 are basic motif; the sequence is RLKQKRRTLKNRGYAQSCRYKRVQQK. The region spanning 238–301 is the bZIP domain; the sequence is RLKQKRRTLK…DAYKVKCEKL (64 aa). Residues 266–287 form a leucine-zipper region; the sequence is LENEKTQLIQQVEQLKQEVSRL. A Glycyl lysine isopeptide (Lys-Gly) (interchain with G-Cter in SUMO) cross-link involves residue lysine 297.

Belongs to the bZIP family. Maf subfamily. Homodimer or heterodimer with other bHLH-Zip transcription factors. Forms homodimers and heterodimers with FOS, FOSB and FOSL2, but not with JUN proteins (JUN, JUNB and JUND). Interacts with the intracellular cytoplasmic domain of LRP1 (LRPICD); the interaction results in a moderate reduction of MAFB transcriptional potential. Binds DNA as a homodimer or a heterodimer. Interacts with PAX6; the interaction is direct. Interacts with ETS1 and LRP1. Sumoylated. Sumoylation on Lys-32 and Lys-297 stimulates its transcriptional repression activity and promotes macrophage differentiation from myeloid progenitors. As to expression, expressed in pancreatic alpha-cells (glucagon-positive cells), in podocytes of the kidney and macrophages (at protein level). Most abundant in kidney, gut, lung and brain.

The protein resides in the nucleus. Functionally, acts as a transcriptional activator or repressor. Plays a pivotal role in regulating lineage-specific hematopoiesis by repressing ETS1-mediated transcription of erythroid-specific genes in myeloid cells. Required for monocytic, macrophage, osteoclast, podocyte and islet beta cell differentiation. Involved in renal tubule survival and F4/80 maturation. Activates the insulin and glucagon promoters. Together with PAX6, transactivates weakly the glucagon gene promoter through the G1 element. SUMO modification controls its transcriptional activity and ability to specify macrophage fate. Binds element G1 on the glucagon promoter. Involved either as an oncogene or as a tumor suppressor, depending on the cell context. Required for the transcriptional activation of HOXB3 in the rhombomere r5 in the hindbrain. The sequence is that of Transcription factor MafB (Mafb) from Mus musculus (Mouse).